Consider the following 424-residue polypeptide: MHDLRAIRDNPEAFDTGLARRGLPPASAAILDLDQRRRAAQTSFQECQARRNEASRLIGAYKKDGKDAQPLLDEVAALKERIPALEEEDRRLGAELDALLAALPNLPAADVPEGKDEHDNVEIRRVGTPRDIPGAKQHFELGEALGLMDFEGAARMSGARFTVLKGQLARLERALGDFMLDLHTREFGYTEVSPPLLVRDEAVFGTGQLPKFADDLFRTTTGHWLIPTAEVTLTNLANDSIIDAEALPWRLTARTPCFRSEAGSAGKDTRGMIRQHQFMKVELVSITLPEQSEAEHERMTKAAETVLERLGLPFRTVVLCTGDMGFSARKTYDIEVWLPGQGAYREISSCSNCGDFQARRMKARSRPKGEKGTQVVHTLNGSGVAVGRALIAVMENYQQPDGSILVPEALRPYMGGQERITAHG.

228–230 (TAE) lines the L-serine pocket. Residue 259–261 (RSE) coordinates ATP. Residue glutamate 282 participates in L-serine binding. 346 to 349 (EISS) is a binding site for ATP. L-serine is bound at residue serine 382.

The protein belongs to the class-II aminoacyl-tRNA synthetase family. Type-1 seryl-tRNA synthetase subfamily. Homodimer. The tRNA molecule binds across the dimer.

It localises to the cytoplasm. The catalysed reaction is tRNA(Ser) + L-serine + ATP = L-seryl-tRNA(Ser) + AMP + diphosphate + H(+). It carries out the reaction tRNA(Sec) + L-serine + ATP = L-seryl-tRNA(Sec) + AMP + diphosphate + H(+). It participates in aminoacyl-tRNA biosynthesis; selenocysteinyl-tRNA(Sec) biosynthesis; L-seryl-tRNA(Sec) from L-serine and tRNA(Sec): step 1/1. Catalyzes the attachment of serine to tRNA(Ser). Is also able to aminoacylate tRNA(Sec) with serine, to form the misacylated tRNA L-seryl-tRNA(Sec), which will be further converted into selenocysteinyl-tRNA(Sec). The polypeptide is Serine--tRNA ligase (Rhodospirillum centenum (strain ATCC 51521 / SW)).